The chain runs to 675 residues: Methionine--tRNA ligase (675 aa).

The 'HIGH' region signature appears at 15-25 (PYANGSIHLGH). The Zn(2+) site is built by Cys146, Cys149, Cys159, and Cys162. The short motif at 332–336 (KMSKS) is the 'KMSKS' region element. ATP is bound at residue Lys335. The 103-residue stretch at 573 to 675 (DFAKVDMRIA…SGAQPGMQVK (103 aa)) folds into the tRNA-binding domain.

This sequence belongs to the class-I aminoacyl-tRNA synthetase family. MetG type 1 subfamily. Homodimer. It depends on Zn(2+) as a cofactor.

Its subcellular location is the cytoplasm. The catalysed reaction is tRNA(Met) + L-methionine + ATP = L-methionyl-tRNA(Met) + AMP + diphosphate. In terms of biological role, is required not only for elongation of protein synthesis but also for the initiation of all mRNA translation through initiator tRNA(fMet) aminoacylation. The chain is Methionine--tRNA ligase from Yersinia pestis bv. Antiqua (strain Angola).